Here is a 370-residue protein sequence, read N- to C-terminus: Chorismate synthase (370 aa).

Arg48 and Arg54 together coordinate NADP(+). FMN contacts are provided by residues 130–132 (RSS), 242–243 (NA), Gly287, 302–306 (KPTSS), and Arg328.

It belongs to the chorismate synthase family. Homotetramer. FMNH2 serves as cofactor.

It carries out the reaction 5-O-(1-carboxyvinyl)-3-phosphoshikimate = chorismate + phosphate. Its pathway is metabolic intermediate biosynthesis; chorismate biosynthesis; chorismate from D-erythrose 4-phosphate and phosphoenolpyruvate: step 7/7. Its function is as follows. Catalyzes the anti-1,4-elimination of the C-3 phosphate and the C-6 proR hydrogen from 5-enolpyruvylshikimate-3-phosphate (EPSP) to yield chorismate, which is the branch point compound that serves as the starting substrate for the three terminal pathways of aromatic amino acid biosynthesis. This reaction introduces a second double bond into the aromatic ring system. The polypeptide is Chorismate synthase (Xanthobacter autotrophicus (strain ATCC BAA-1158 / Py2)).